Consider the following 205-residue polypeptide: TATA-box-binding protein (205 aa).

2 tandem repeats follow at residues 27–103 (LQNI…ARII) and 117–194 (IQNI…YPVL).

It belongs to the TBP family. In terms of assembly, belongs to the TFIID complex together with the TBP-associated factors (TAFs). Binds DNA as monomer.

The protein resides in the nucleus. In terms of biological role, general transcription factor that functions at the core of the DNA-binding multiprotein factor TFIID. Binding of TFIID to the TATA box is the initial transcriptional step of the pre-initiation complex (PIC), playing a role in the activation of eukaryotic genes transcribed by RNA polymerase II. This is TATA-box-binding protein (tbpA) from Dictyostelium discoideum (Social amoeba).